Reading from the N-terminus, the 84-residue chain is U2-theraphotoxin-Cg1b 2 (84 aa).

Residues 1–21 (MKVSVLITLAVLGVMFLLTSA) form the signal peptide. Positions 22–48 (EERGSDQMDSPAWLKSMEIIFQSEERE) are excised as a propeptide. Disulfide bonds link Cys-49–Cys-63, Cys-56–Cys-68, and Cys-62–Cys-76.

The protein belongs to the neurotoxin 10 (Hwtx-1) family. 06 (F4b) subfamily. As to expression, expressed by the venom gland.

The protein resides in the secreted. In terms of biological role, probable ion channel inhibitor. This is U2-theraphotoxin-Cg1b 2 from Chilobrachys guangxiensis (Chinese earth tiger tarantula).